Here is a 160-residue protein sequence, read N- to C-terminus: Cytochrome b6-f complex subunit 4 (160 aa).

The Cytoplasmic segment spans residues Met1–Asp35. A helical transmembrane segment spans residues Leu36 to Val56. Topologically, residues Leu57 to Lys94 are lumenal, thylakoid. Residues Leu95–Glu115 form a helical membrane-spanning segment. Over Asn116–Thr130 the chain is Cytoplasmic. A helical transmembrane segment spans residues Thr131–Leu151. Topologically, residues Asp152–Phe160 are lumenal, thylakoid.

Belongs to the cytochrome b family. PetD subfamily. In terms of assembly, the 4 large subunits of the cytochrome b6-f complex are cytochrome b6, subunit IV (17 kDa polypeptide, PetD), cytochrome f and the Rieske protein, while the 4 small subunits are PetG, PetL, PetM and PetN. The complex functions as a dimer.

Its subcellular location is the cellular thylakoid membrane. Component of the cytochrome b6-f complex, which mediates electron transfer between photosystem II (PSII) and photosystem I (PSI), cyclic electron flow around PSI, and state transitions. The chain is Cytochrome b6-f complex subunit 4 from Mastigocladus laminosus (Fischerella sp.).